We begin with the raw amino-acid sequence, 239 residues long: UDP-2,3-diacylglucosamine hydrolase (239 aa).

The Mn(2+) site is built by Asp8, His10, Asp41, Asn78, and His113. 78–79 (NR) is a substrate binding site. 5 residues coordinate substrate: Asp121, Ser159, Asn163, Lys166, and His194. 2 residues coordinate Mn(2+): His194 and His196.

Belongs to the LpxH family. It depends on Mn(2+) as a cofactor.

It localises to the cell inner membrane. It catalyses the reaction UDP-2-N,3-O-bis[(3R)-3-hydroxytetradecanoyl]-alpha-D-glucosamine + H2O = 2-N,3-O-bis[(3R)-3-hydroxytetradecanoyl]-alpha-D-glucosaminyl 1-phosphate + UMP + 2 H(+). The protein operates within glycolipid biosynthesis; lipid IV(A) biosynthesis; lipid IV(A) from (3R)-3-hydroxytetradecanoyl-[acyl-carrier-protein] and UDP-N-acetyl-alpha-D-glucosamine: step 4/6. Its function is as follows. Hydrolyzes the pyrophosphate bond of UDP-2,3-diacylglucosamine to yield 2,3-diacylglucosamine 1-phosphate (lipid X) and UMP by catalyzing the attack of water at the alpha-P atom. Involved in the biosynthesis of lipid A, a phosphorylated glycolipid that anchors the lipopolysaccharide to the outer membrane of the cell. The sequence is that of UDP-2,3-diacylglucosamine hydrolase from Shewanella sp. (strain MR-4).